A 168-amino-acid chain; its full sequence is G/U mismatch-specific DNA glycosylase (168 aa).

This sequence belongs to the uracil-DNA glycosylase (UDG) superfamily. TDG/mug family. Binds DNA as a monomer.

The protein localises to the cytoplasm. The catalysed reaction is Specifically hydrolyzes mismatched double-stranded DNA and polynucleotides, releasing free uracil.. Excises ethenocytosine and uracil, which can arise by alkylation or deamination of cytosine, respectively, from the corresponding mispairs with guanine in ds-DNA. It is capable of hydrolyzing the carbon-nitrogen bond between the sugar-phosphate backbone of the DNA and the mispaired base. The complementary strand guanine functions in substrate recognition. Required for DNA damage lesion repair in stationary-phase cells. In Escherichia coli (strain SMS-3-5 / SECEC), this protein is G/U mismatch-specific DNA glycosylase.